The following is a 151-amino-acid chain: Probable transport accessory protein MmpS1 (151 aa).

The next 2 helical transmembrane spans lie at 8 to 28 (FWIP…VSRL) and 81 to 101 (VVNA…AVVA).

This sequence belongs to the MmpS family.

Its subcellular location is the cell membrane. This Mycobacterium tuberculosis (strain CDC 1551 / Oshkosh) protein is Probable transport accessory protein MmpS1 (mmpS1).